A 496-amino-acid chain; its full sequence is MSLWYIIVAFVFFSSMIIVRIIRKTKKNLPPGPPRLPIIGNLHQLGSKPHRSMFKLSETYGPLMSLKFGSVSTVVASTPETVKEVLKTFDVECCSRPNMTYPARVTYNLKDLCFSPYSKYWREVRKMTVVELYTAKRVQSFQHTRKEEVAALVDFIKQAASLEKPVNLNKKLMKLSGSVICRVAFGINLQGSKLENTYEEVIQGTVELVGSFAAADYFPVVGRIIDRITGLHSKCEKLFKAMDAFFDQSIKHHLEDEIIKDDIIDLLLKMERGETTLGEFQLTRDHTKGILANILNAGIDTSAQVMTWVMTYLISNPRVLKKAQAEVREVIKHKDDIIEEDIERLQYLKMVIKETFRINPLVPLLIPREASKDVKIGGYNIPKKTWIHVNIWAIHRNPNVWKDPEAFIPERFMDSQIDYKGLNFELLPFGSGRRICPGIGMGMALVHLTLINLLYRFDWKLPEGMKVADVDLEESYGLVCPKKIPLQLIPVLTQWT.

The helical transmembrane segment at 2–22 (SLWYIIVAFVFFSSMIIVRII) threads the bilayer. C436 provides a ligand contact to heme.

Belongs to the cytochrome P450 family. Requires heme as cofactor.

It localises to the membrane. This Arabidopsis thaliana (Mouse-ear cress) protein is Cytochrome P450 71B12 (CYP71B12).